Here is a 3195-residue protein sequence, read N- to C-terminus: Large tegument protein deneddylase (3195 aa).

A Peptidase C76 domain is found at 10–242 (VAAASRSQFD…VEVISAALRA (233 aa)). Residues Cys30, Asp173, and His175 contribute to the active site. 4 disordered regions span residues 287 to 374 (RGTA…GALA), 2407 to 2776 (NPAH…DSNY), 2829 to 3068 (AGVG…AALD), and 3128 to 3147 (ASDL…APLD). The segment covering 338 to 347 (KVKKPNKGKK) has biased composition (basic residues). Residues 2470–2482 (KIERASGKNRKTE) are compositionally biased toward basic and acidic residues. Residues 2491–2503 (AARGRAAAPPTET) show a composition bias toward low complexity. Composition is skewed to basic and acidic residues over residues 2504 to 2527 (KTTE…RAPH) and 2538 to 2562 (RPPR…DKAA). Composition is skewed to basic residues over residues 2588 to 2615 (PKTK…HRTH) and 2636 to 2648 (GRQR…GKKR). Composition is skewed to basic and acidic residues over residues 2649–2672 (SGTD…KFSR) and 2687–2696 (ACDRLGERGN). Residues 2701-2712 (PRAPASSPPPPG) are compositionally biased toward pro residues. Over residues 2714 to 2723 (QADHGIDQRE) the composition is skewed to basic and acidic residues. Composition is skewed to acidic residues over residues 2748–2768 (DDGD…EEDV) and 2835–2844 (WSEEDEDAPA). Residues 2850–2864 (STNVEVATHGYTSDD) are compositionally biased toward polar residues. Residues 2869–2878 (DESKRARATR) show a composition bias toward basic and acidic residues. Positions 2887–2903 (PASPLAPSTPSSLPTPA) are enriched in low complexity. Residues 2959–2981 (DDARKKQENSSHERKDDGVRWEI) are compositionally biased toward basic and acidic residues. The segment covering 2982–2994 (DLDSDQGDYSDAS) has biased composition (acidic residues). 3 stretches are compositionally biased toward basic and acidic residues: residues 2995–3021 (DDCK…KSES), 3050–3062 (SDDK…DPKL), and 3131–3140 (LDDHQSDQPR).

The protein belongs to the herpesviridae large tegument protein family. In terms of assembly, interacts with host CUL1 and CUL4A; these interactions inhibit the E3 ligase activity of cullins. Interacts with inner tegument protein. Interacts with capsid vertex specific component CVC2. Interacts with the major capsid protein/MCP.

It localises to the virion tegument. Its subcellular location is the host cytoplasm. The protein localises to the host nucleus. It catalyses the reaction Thiol-dependent hydrolysis of ester, thioester, amide, peptide and isopeptide bonds formed by the C-terminal Gly of ubiquitin (a 76-residue protein attached to proteins as an intracellular targeting signal).. Its function is as follows. Large tegument protein that plays multiple roles in the viral cycle. During viral entry, remains associated with the capsid while most of the tegument is detached and participates in the capsid transport toward the host nucleus. Plays a role in the routing of the capsid at the nuclear pore complex and subsequent uncoating. Within the host nucleus, acts as a deneddylase and promotes the degradation of nuclear CRLs (cullin-RING ubiquitin ligases) and thereby stabilizes nuclear CRL substrates, while cytoplasmic CRLs remain unaffected. These modifications prevent host cell cycle S-phase progression and create a favorable environment allowing efficient viral genome replication. Participates later in the secondary envelopment of capsids. Indeed, plays a linker role for the association of the outer viral tegument to the capsids together with the inner tegument protein. The protein is Large tegument protein deneddylase (UL36) of Amazona oratrix (yellow-headed parrot).